A 763-amino-acid chain; its full sequence is Hormone-sensitive lipase (763 aa).

An Involved in the stabilization of the negatively charged intermediate by the formation of the oxyanion hole motif is present at residues 350 to 352 (HGG). The active site involves Ser-424. At Ser-552 the chain carries Phosphoserine. Ser-554 carries the post-translational modification Phosphoserine; by AMPK. Ser-595, Ser-627, and Ser-649 each carry phosphoserine. A compositionally biased stretch (basic and acidic residues) spans 616–627 (AREEAEAKEGLS). Positions 616-652 (AREEAEAKEGLSAKDGSSRVSNAFPEGFHPRRTSQGA) are disordered. Residues Asp-692 and His-722 contribute to the active site.

It belongs to the 'GDXG' lipolytic enzyme family. Monomer and homodimer. Interacts with CAVIN1 in the adipocyte cytoplasm. Interacts with PLIN5. Phosphorylation by AMPK reduces its translocation towards the lipid droplets.

The protein localises to the cell membrane. Its subcellular location is the membrane. The protein resides in the caveola. It localises to the cytoplasm. It is found in the cytosol. The protein localises to the lipid droplet. It catalyses the reaction a diacylglycerol + H2O = a monoacylglycerol + a fatty acid + H(+). It carries out the reaction a triacylglycerol + H2O = a diacylglycerol + a fatty acid + H(+). The catalysed reaction is a monoacylglycerol + H2O = glycerol + a fatty acid + H(+). The enzyme catalyses Hydrolyzes glycerol monoesters of long-chain fatty acids.. It catalyses the reaction 1,2-di-(9Z-octadecenoyl)-glycerol + (9Z)-octadecenoate + H(+) = 1,2,3-tri-(9Z-octadecenoyl)-glycerol + H2O. It carries out the reaction 2,3-di-(9Z)-octadecenoyl-sn-glycerol + H2O = 2-(9Z-octadecenoyl)-glycerol + (9Z)-octadecenoate + H(+). The catalysed reaction is cholesteryl (9Z-octadecenoate) + H2O = cholesterol + (9Z)-octadecenoate + H(+). The enzyme catalyses 1,2,3-tri-(9Z-octadecenoyl)-glycerol + H2O = di-(9Z)-octadecenoylglycerol + (9Z)-octadecenoate + H(+). It catalyses the reaction all-trans-retinyl hexadecanoate + H2O = all-trans-retinol + hexadecanoate + H(+). It carries out the reaction 1,2-di-(9Z-octadecenoyl)-glycerol + H2O = (9Z-octadecenoyl)-glycerol + (9Z)-octadecenoate + H(+). The catalysed reaction is 2-(5Z,8Z,11Z,14Z-eicosatetraenoyl)-glycerol + H2O = glycerol + (5Z,8Z,11Z,14Z)-eicosatetraenoate + H(+). The enzyme catalyses 1-(9Z-octadecenoyl)-glycerol + H2O = glycerol + (9Z)-octadecenoate + H(+). It catalyses the reaction 2-(9Z-octadecenoyl)-glycerol + H2O = glycerol + (9Z)-octadecenoate + H(+). It carries out the reaction 1-O-hexadecyl-2-acetyl-sn-glycerol + H2O = 1-O-hexadecyl-sn-glycerol + acetate + H(+). The catalysed reaction is 1,2-di-(9Z-octadecenoyl)-sn-glycerol + H2O = (9Z-octadecenoyl)-glycerol + (9Z)-octadecenoate + H(+). The enzyme catalyses 1,3-di-(9Z-octadecenoyl)-glycerol + H2O = 1-(9Z-octadecenoyl)-glycerol + (9Z)-octadecenoate + H(+). It catalyses the reaction 1,2-di-(9Z-octadecenoyl)-glycerol + H2O = 2-(9Z-octadecenoyl)-glycerol + (9Z)-octadecenoate + H(+). Its pathway is glycerolipid metabolism; triacylglycerol degradation. Its function is as follows. Lipase with broad substrate specificity, catalyzing the hydrolysis of triacylglycerols (TAGs), diacylglycerols (DAGs), monoacylglycerols (MAGs), cholesteryl esters and retinyl esters. Shows a preferential hydrolysis of DAGs over TAGs and MAGs. Preferentially hydrolyzes fatty acid (FA) esters at the sn-3 position of the glycerol backbone in DAGs and FA esters at the sn-1 and sn-2 positions of the glycerol backbone in TAGs. Catalyzes the hydrolysis of 2-arachidonoylglycerol, an endocannabinoid and of 2-acetyl monoalkylglycerol ether, the penultimate precursor of the pathway for de novo synthesis of platelet-activating factor. In adipose tissue and heart, it primarily hydrolyzes stored triglycerides to free fatty acids, while in steroidogenic tissues, it principally converts cholesteryl esters to free cholesterol for steroid hormone production. The chain is Hormone-sensitive lipase (LIPE) from Ictidomys tridecemlineatus (Thirteen-lined ground squirrel).